The following is a 156-amino-acid chain: Transcriptional repressor NrdR (156 aa).

A zinc finger spans residues 3–34; the sequence is CPYCGHLDNKVIDSRINKDATITRRRRSCLAC. The region spanning 49–139 is the ATP-cone domain; that stretch reads PMLVKKDGRR…VYRQFKDVDE (91 aa).

This sequence belongs to the NrdR family. Zn(2+) is required as a cofactor.

In terms of biological role, negatively regulates transcription of bacterial ribonucleotide reductase nrd genes and operons by binding to NrdR-boxes. This chain is Transcriptional repressor NrdR, found in Desulfotalea psychrophila (strain LSv54 / DSM 12343).